Here is a 291-residue protein sequence, read N- to C-terminus: Probable 2-(5''-triphosphoribosyl)-3'-dephosphocoenzyme-A synthase (291 aa).

The protein belongs to the CitG/MdcB family.

It carries out the reaction 3'-dephospho-CoA + ATP = 2'-(5''-triphospho-alpha-D-ribosyl)-3'-dephospho-CoA + adenine. Functionally, involved in the formation of 2-(5''-phosphoribosyl)-3'-dephosphocoenzyme-A, the prosthetic group of the acyl-carrier protein of the malonate decarboxylase. The sequence is that of Probable 2-(5''-triphosphoribosyl)-3'-dephosphocoenzyme-A synthase from Pseudomonas syringae pv. syringae (strain B728a).